The chain runs to 463 residues: Argininosuccinate lyase (463 aa).

This sequence belongs to the lyase 1 family. Argininosuccinate lyase subfamily.

It is found in the cytoplasm. The catalysed reaction is 2-(N(omega)-L-arginino)succinate = fumarate + L-arginine. The protein operates within amino-acid biosynthesis; L-arginine biosynthesis; L-arginine from L-ornithine and carbamoyl phosphate: step 3/3. The sequence is that of Argininosuccinate lyase from Bradyrhizobium sp. (strain ORS 278).